The sequence spans 377 residues: Gap junction gamma-1 protein (377 aa).

Over 1–18 (MSWSFLTRLLEEINNHST) the chain is Cytoplasmic. The helical transmembrane segment at 19–39 (FVGKIWLTVLIIFRIVLTAVG) threads the bilayer. Residues 40–75 (GESIYYDEQSKFTCNTHQPGCENVCYDAFAPLSHVR) lie on the Extracellular side of the membrane. A helical transmembrane segment spans residues 76-96 (FWVFQIILITTPSIMYLGFAM). At 97–174 (HRIARQPDEQ…RRIKQDGLMK (78 aa)) the chain is on the cytoplasmic side. The tract at residues 129-163 (DYEEAEDNQEEDPMICEEEEPEKDSEKGDKKKHDG) is disordered. A compositionally biased stretch (acidic residues) spans 131 to 151 (EEAEDNQEEDPMICEEEEPEK). Residues 175-197 (VYVLQLLFRSVFEVGFLMGQYVL) form a helical membrane-spanning segment. The Extracellular segment spans residues 198 to 228 (YGFEVIPFFVCSRNPCPHTVDCFVSRPTEKT). A helical transmembrane segment spans residues 229 to 249 (IFLLIMYAVSALCLFLNLCEL). Over 250–377 (FHLGIGGIRD…GVGSREKSGL (128 aa)) the chain is Cytoplasmic. Disordered regions lie at residues 266–286 (KEIQESRKKKPSAPPNYHSVL) and 341–377 (AHASRSSSPEANSIAAEQNRLNLAQEKGVGSREKSGL). Residues 344–362 (SRSSSPEANSIAAEQNRLN) are compositionally biased toward polar residues.

It belongs to the connexin family. Gamma-type subfamily. In terms of assembly, a connexon is composed of a hexamer of connexins.

It localises to the cell membrane. The protein resides in the cell junction. Its subcellular location is the gap junction. In terms of biological role, one gap junction consists of a cluster of closely packed pairs of transmembrane channels, the connexons, through which materials of low MW diffuse from one cell to a neighboring cell. This chain is Gap junction gamma-1 protein (gjc1), found in Xenopus laevis (African clawed frog).